Consider the following 160-residue polypeptide: UPF0479 membrane protein YER190C-B (160 aa).

A run of 2 helical transmembrane segments spans residues 39 to 59 (IVFC…KVLQ) and 136 to 156 (VPMI…ISQH).

The protein belongs to the UPF0479 family.

It is found in the membrane. The polypeptide is UPF0479 membrane protein YER190C-B (Saccharomyces cerevisiae (strain ATCC 204508 / S288c) (Baker's yeast)).